A 482-amino-acid polypeptide reads, in one-letter code: Nicotine dehydrogenase (482 aa).

Positions Met1–Ala38 form a signal peptide, tat-type signal. 7 residues coordinate FAD: Ala64, Glu83, Ala84, Arg85, Arg91, Trp108, and Val279. Residue Thr381 coordinates (S)-nicotine. The FAD site is built by Ala453, Asn462, and Ile463.

It belongs to the flavin monoamine oxidase family. As to quaternary structure, monomer in solution. Homodimer in solution. Forms homodimers in the crystal. It depends on FAD as a cofactor. Predicted to be exported by the Tat system. The position of the signal peptide cleavage has not been experimentally proven.

The protein resides in the periplasm. It catalyses the reaction (S)-nicotine + 2 Fe(III)-[cytochrome c] = N-methylmyosmine + 2 Fe(II)-[cytochrome c] + 2 H(+). The protein operates within alkaloid degradation; nicotine degradation. Its activity is regulated as follows. The catalytic rate is not significantly affected by pH. Involved in nicotine degradation. Catalyzes the conversion of nicotine to N-methylmyosmine. N-methylmyosmine undergoes spontaneous hydrolysis to form pseudooxynicotine (PN). S-nicotine is the optimal substrate. Has lower activity with some nicotine analogs, but shows no activity towards neurotransmitters, including serotonin, dopamine, and norepinephrine, nicotine metabolites and common neuroactive drugs. The enzyme is stereospecific with poor activity with (R)-nicotine as the substrate. The c-type cytochrome protein CycN is the physiological electron acceptor. O(2) is a poor electron acceptor. The protein is Nicotine dehydrogenase of Pseudomonas putida (strain DSM 28022 / S16).